We begin with the raw amino-acid sequence, 489 residues long: Ribonuclease G (489 aa).

The 90-residue stretch at 39–128 (GNIYKGRVSR…LTTDITLPSR (90 aa)) folds into the S1 motif domain. Mg(2+) is bound by residues Asp304 and Asp347.

Belongs to the RNase E/G family. RNase G subfamily. In terms of assembly, homodimer, and possible higher multimers. Requires Mg(2+) as cofactor.

Its subcellular location is the cytoplasm. Functionally, acts in the processing of the 5'-end of precursors of 16S rRNA. Confers adaptive resistance to aminoglycoside antibiotics through modulation of 16S rRNA processing. An endoribonuclease, it prefers 5'-monophosphorylated substrates and cleaves single-stranded sites rich in A and U residues; also contributes to 23S rRNA processing, tRNA processing and mRNA turnover. Involved in decay of speF mRNA, has a preference for adenine nucleotides. This is Ribonuclease G from Salmonella typhimurium (strain SL1344).